Here is a 198-residue protein sequence, read N- to C-terminus: Beta-crystallin A1-2 (198 aa).

Residues 1–13 (MAQINPLPVPLGP) are N-terminal arm. Beta/gamma crystallin 'Greek key' domains lie at 14–53 (WKIT…KVEC) and 54–100 (GAWI…RPIC). Residues 101-106 (SANHIE) form a connecting peptide region. Beta/gamma crystallin 'Greek key' domains follow at residues 107 to 148 (SKLV…KVQC) and 149 to 197 (GAWV…RRIQ).

Belongs to the beta/gamma-crystallin family. As to quaternary structure, homo/heterodimer, or complexes of higher-order. The structure of beta-crystallin oligomers seems to be stabilized through interactions between the N-terminal arms. The N-terminus is blocked.

Crystallins are the dominant structural components of the vertebrate eye lens. The sequence is that of Beta-crystallin A1-2 from Aquarana catesbeiana (American bullfrog).